The chain runs to 89 residues: UPF0367 protein PCC8801_1959 (89 aa).

Belongs to the UPF0367 family.

The protein is UPF0367 protein PCC8801_1959 of Rippkaea orientalis (strain PCC 8801 / RF-1) (Cyanothece sp. (strain PCC 8801)).